Here is a 246-residue protein sequence, read N- to C-terminus: Probable transcriptional regulatory protein YebC (246 aa).

The tract at residues methionine 1 to lysine 20 is disordered.

Belongs to the TACO1 family.

The protein localises to the cytoplasm. This chain is Probable transcriptional regulatory protein YebC, found in Salmonella choleraesuis (strain SC-B67).